A 124-amino-acid polypeptide reads, in one-letter code: Chemotaxis protein CheY1 (124 aa).

A Response regulatory domain is found at 2–120 (KLLVVDDSST…VLKEKLEVVL (119 aa)). Positions 7, 8, 53, and 55 each coordinate Mg(2+). At aspartate 53 the chain carries 4-aspartylphosphate.

As to quaternary structure, interacts (when phosphorylated) with FliM. It depends on Mg(2+) as a cofactor. In terms of processing, phosphorylated by CheAY. Dephosphorylated (inactivated) by CheZ.

It is found in the cytoplasm. In terms of biological role, chemotactic response regulator protein that modulates the rotation direction of bacterial flagellar motors. Plays an important role in the colonization and infection of Helicobacter pylori. Upon phosphorylation by CheA, interacts with the flagellar motor protein FliM to cause clockwise flagellar rotation and bacterial reversals, as opposed to straight swimming when CheY1 is not phosphorylated. The chain is Chemotaxis protein CheY1 from Helicobacter pylori (strain ATCC 700392 / 26695) (Campylobacter pylori).